We begin with the raw amino-acid sequence, 1939 residues long: Myosin heavy chain, skeletal muscle, adult (1939 aa).

N-acetylalanine is present on Ala2. The Myosin N-terminal SH3-like domain occupies 34-83 (DAKSSVFVVHPKESFVKGTIQSKEGGKVTVKTEGGETLTVKEDQVFSMNP). Lys36 bears the N6-methyllysine mark. The Myosin motor domain maps to 87-781 (DKIEDMAMMT…LLGLLEEMRD (695 aa)). At Lys131 the chain carries N6,N6,N6-trimethyllysine. 180–187 (GESGAGKT) contributes to the ATP binding site. At Lys552 the chain carries N6,N6,N6-trimethyllysine. The interval 658 to 680 (LNKLMANLRSTHPHFVRCIIPNE) is actin-binding. Position 756 is a pros-methylhistidine (His756). Positions 760-774 (RFGHTKVFFKAGLLG) are actin-binding. The IQ domain occupies 784-813 (LAEIITRTQARCRGFLMRVEYRRMVERRES). Positions 839 to 841 (IKP) are hinge. Residues 842-1939 (LLKSAESEKE…IHGKKIEEEE (1098 aa)) are a coiled coil.

It belongs to the TRAFAC class myosin-kinesin ATPase superfamily. Myosin family. Muscle myosin is a hexameric protein that consists of 2 heavy chain subunits (MHC), 2 alkali light chain subunits (MLC) and 2 regulatory light chain subunits (MLC-2).

The protein resides in the cytoplasm. Its subcellular location is the myofibril. Muscle contraction. Myosin is a protein that binds to F-actin and has ATPase activity that is activated by F-actin. The protein is Myosin heavy chain, skeletal muscle, adult of Gallus gallus (Chicken).